Reading from the N-terminus, the 205-residue chain is MKFSGLWCWLLLFLSVNVIASDVGELIDQDDEVITQKVFFDIEHGEEKVGRIVIGLYGKVCPKTAKNFYKLSTTTNSKKGFIGSTFHRVIPNFMVQGGDFTDGTGVGGKSIYGDTFPDENFTLKHDRKGRLSMANRGKDTNGSQFFITTTEEASWLDGKHVVFGQVVDGMDVVNYIQHVSRDANDKPLEAVKIAKCGEWTPELSS.

Residues 1–20 (MKFSGLWCWLLLFLSVNVIA) form the signal peptide. In terms of domain architecture, PPIase cyclophilin-type spans 39–198 (FFDIEHGEEK…EAVKIAKCGE (160 aa)).

This sequence belongs to the cyclophilin-type PPIase family. PPIase B subfamily.

It localises to the secreted. The catalysed reaction is [protein]-peptidylproline (omega=180) = [protein]-peptidylproline (omega=0). Its activity is regulated as follows. Cyclosporin A (CsA) inhibits CYPB. In terms of biological role, PPIases accelerate the folding of proteins. It catalyzes the cis-trans isomerization of proline imidic peptide bonds in oligopeptides. The protein is Peptidyl-prolyl cis-trans isomerase B (CPR2) of Saccharomyces cerevisiae (strain ATCC 204508 / S288c) (Baker's yeast).